The chain runs to 1578 residues: MKHYYRLLFLLLFPLLASAQPAHGKKVVGYYAQWSIYARDFNVPKIDGSKLTHLNYSFYGTTYDPAHPENTKLKCLDTYADFEHMEGGIPWDAPVKGNFYDLMKLKQKYPHLKILISVGGWTKGQDLSPIAASPVARAALAADMANFIVTYPFIDGFDIDWEYPLSGGTDGTEIVNGMPVPPQKYSPDDNKNLVLLLKAMRQAMPNKLVTIAAGNNVRNVSKQYLGPNNRAQYGMTEDISTYCDYITYFGYDFGGNWYDKTCYNAPLYASGNPNDPLYGATQSESLDELTNQYLNVIGFPANKLIMGLPFYGKKFDNVAANSTNGLFVAAPRYIVPGCTNPQNPTGTWDGSGACEKSGSIEICDLVGNPVTNSHAYLDPNTMMVTPSAASAGWVRYFDNTTKVPYLYNSTLKQFISYEDKQSMDLKVQYIKSRNLAGGMIWELSQDTRGSIPNSLLNQVDTSFGSVVPGTVSISGSVKNGSALVTDVTVELRNASNAVIQTVVSANGNFAFNNLTSGQNYSLTALKATYTFTPVTLVNVTVNQTAVVINGTQPTYTVSGTVLDGSTPVSGVTVTAVSGSTTLTAVSNASGVYSIAGLTAGLNFTVTAAKSGFSYAPASTVYNAIDSNKTLNFTQGAPVVNYTVSGTVLNSTTPVSGVTVTASFTGGSYAAVTNASGTYSLSLPSGGNYTVTAALTGQTFTPASTVYSNLNANKTLNFTQDVVVSTSKISGTVKNGTNPVAGAKVELVLPWTDNTHNWKSVIATTDAQGKYSFDNSVVDGYTQVLSLKLNSWQNGEVAYYPNNLANFAVPANPTVYNFNTSSTAKSALAAAANLISGTVKNGTTPVAGAKVEIVLPWTDNTHNWKSVLATTDASGNYSFDNSVVAGYTQILSLKLNGWENGDVTYYPNNLANFAVPTTPTIYNFNRQAVVATKPVVTITAPTASAIAINLGSAINFVASVGLSAVDATTISSVVFSLDGQSLSTANSSGTYTAAWTPAANQFSLSHTLTVTATASNGTTDSKTYSFTLTCSGANCPNALPVITWNSPSNTTVYQNTFQVVPISVTAVDSDGTVSGVTITINGGTFNMTAGTNNTYTYNFTPSAYQDYPVVIKATDNKSGVTTLNNTIKIATVSTNRFIPLPSKIILGYAHSWENAGAPFLYFSQMVGSKFNVVDYSFVETVNRDGYTPILTTNDTRYLTNGVFNKQLLKNDIKSLRDSGVPVIVSIGGQNGHVVLDNVTQKNIFVNGLKAIIDEYQFDGVDIDFEGGSMNFNAGGLRDISYAGISAYPRLKNVVDAFKELKAYYGPGFLLTAAPETQYVQGGYTTYTDTFGSFLPIIQNLRNELDLLAVQLYNTGGENGLDGQYYGTAKKSNMVTALTDMVIKGYNIASTGMRFDGLPASKVLIALPACPSAAGSGYLTPTEGINAMHYLRTGTTFSGRTYTMQPGGPYPSLRGLMTWSVNWDASSCGNSSELSKAYAAYFASQTAAKTLVLDDISAKSNATIAYFKNNALSVTNENEDIAQVDVFNVLGQNLVSHRNVQNNKEVLLHNQSFSSKQLFLVVVTDKAGNKKSFKVMNFLN.

The first 19 residues, 1-19, serve as a signal peptide directing secretion; sequence MKHYYRLLFLLLFPLLASA. Positions 25 to 466 constitute a GH18 1 domain; the sequence is KKVVGYYAQW…NQVDTSFGSV (442 aa). Residues 26–446 form a GH18N region; that stretch reads KVVGYYAQWS…GGMIWELSQD (421 aa). Chitin contacts are provided by residues 92-93 and 119-122; these read DA and GGWT. Glutamate 162 (proton donor) is an active-site residue. Chitin-binding positions include tyrosine 163, 249–252, and tryptophan 441; that span reads FGYD. The CNA-B domain occupies 485-536; it reads TDVTVELRNASNAVIQTVVSANGNFAFNNLTSGQNYSLTALKATYTFTPVTL. Residues 1142–1462 form a GH18C region; the sequence is KIILGYAHSW…GLMTWSVNWD (321 aa). Positions 1142 to 1483 constitute a GH18 2 domain; that stretch reads KIILGYAHSW…KAYAAYFASQ (342 aa). Glutamate 1264 functions as the Proton donor in the catalytic mechanism. Residues 1473 to 1578 are CTD; sequence SKAYAAYFAS…KSFKVMNFLN (106 aa).

The protein belongs to the glycosyl hydrolase 18 family. Chitinase class II subfamily.

The protein localises to the secreted. The catalysed reaction is Random endo-hydrolysis of N-acetyl-beta-D-glucosaminide (1-&gt;4)-beta-linkages in chitin and chitodextrins.. Functionally, major extracellular chitinase, which is essential for chitin utilization. The chain is Chitinase ChiA (chiA) from Flavobacterium johnsoniae (strain ATCC 17061 / DSM 2064 / JCM 8514 / BCRC 14874 / CCUG 350202 / NBRC 14942 / NCIMB 11054 / UW101) (Cytophaga johnsonae).